The primary structure comprises 331 residues: D-alanine--D-alanine ligase (331 aa).

The ATP-grasp domain maps to K121 to R327. A151–E206 contributes to the ATP binding site. Mg(2+) contacts are provided by D281, E294, and N296.

Belongs to the D-alanine--D-alanine ligase family. Mg(2+) is required as a cofactor. The cofactor is Mn(2+).

It localises to the cytoplasm. It carries out the reaction 2 D-alanine + ATP = D-alanyl-D-alanine + ADP + phosphate + H(+). The protein operates within cell wall biogenesis; peptidoglycan biosynthesis. In terms of biological role, cell wall formation. The sequence is that of D-alanine--D-alanine ligase from Vibrio atlanticus (strain LGP32) (Vibrio splendidus (strain Mel32)).